A 482-amino-acid polypeptide reads, in one-letter code: Auxin transporter-like protein 4 (482 aa).

Topologically, residues 1–59 (MLSQNQAEEAIVTNMNETEQEGGSSLEEIAEDQSMFNFKSFLWHGGSVWDAWFSCASNQ) are cytoplasmic. A helical transmembrane segment spans residues 60–77 (VAQVLLTLPYSFSQLGMV). Over 78–79 (SG) the chain is Extracellular. A helical membrane pass occupies residues 80–100 (IVFQIFYGLIGSWTAYLISVL). Residues 101–135 (YVEYRARKEKENVNFKNHVIQWFEVLDGLLGRYWK) lie on the Cytoplasmic side of the membrane. A helical transmembrane segment spans residues 136–156 (ALGLAFNCTFLLFGSVIQLIA). Over 157–172 (CASNIYYINDKLDKRT) the chain is Extracellular. The chain crosses the membrane as a helical span at residues 173-193 (WTYIFGACCATTVFIPSFHNY). Residues 194 to 196 (RIW) lie on the Cytoplasmic side of the membrane. The chain crosses the membrane as a helical span at residues 197-217 (SFLGLGMTTYTAWYMAIAAIV). Residues 218–232 (NGQIENVVHSGPTKL) lie on the Extracellular side of the membrane. The chain crosses the membrane as a helical span at residues 233–253 (VLYFTGATNILYTFGGHAVTV). The Cytoplasmic segment spans residues 254–266 (EIMHAMWKPQKFK). The chain crosses the membrane as a helical span at residues 267–287 (YIYFLATLYVFTLTIPSAVAV). Residues 288–314 (YWAFGDELLNHSNAFSLLPKNGFRDAA) are Extracellular-facing. Residue asparagine 297 is glycosylated (N-linked (GlcNAc...) asparagine). Residues 315–335 (VILMLIHQFITFGFACTPLYF) traverse the membrane as a helical segment. The Cytoplasmic segment spans residues 336-356 (VWEKVIGMHDTKSICLRALVR). Residues 357 to 377 (LPVVIPIWFLAIIFPFFGPIN) form a helical membrane-spanning segment. Residue serine 378 is a topological domain, extracellular. A helical membrane pass occupies residues 379–399 (AVGALLVTFTVYIIPALAHML). Topologically, residues 400-422 (TYRTASARKNAVEKPPSFLPSWT) are cytoplasmic. The chain crosses the membrane as a helical span at residues 423–443 (AVYVLNAFIVVWVLVVGFGFG). Residues 444-482 (GWASMTNFIRQIDTFGLFAKCYQCKPPTPPQAPSPHARH) lie on the Extracellular side of the membrane.

It belongs to the amino acid/polyamine transporter 2 family. Amino acid/auxin permease (AAAP) (TC 2.A.18.1) subfamily. As to expression, shoots and roots of nodulating plants, at low levels.

The protein localises to the cell membrane. Its function is as follows. Carrier protein involved in proton-driven auxin influx. Mediates the formation of auxin gradient from developing leaves (site of auxin biosynthesis) to tips by contributing to the loading of auxin in vascular tissues and facilitating acropetal (base to tip) auxin transport within inner tissues of the root apex, and basipetal (tip to base) auxin transport within outer tissues of the root apex. May be involved in lateral roots and nodules formation. The protein is Auxin transporter-like protein 4 (LAX4) of Medicago truncatula (Barrel medic).